We begin with the raw amino-acid sequence, 525 residues long: tRNA-splicing endonuclease subunit Sen54 (525 aa).

Residue M1 is modified to N-acetylmethionine. The segment at 1–46 is disordered; the sequence is MEPEPEPGSVEVPAGRVLSASELRAARSRSQKLPQRSHGPKDFLPD. The segment covering 7–23 has biased composition (low complexity); the sequence is PGSVEVPAGRVLSASEL. Position 178 is a phosphoserine (S178). Position 180 is a phosphotyrosine (Y180). A compositionally biased stretch (low complexity) spans 220–232; it reads LPPVSLAASSSPA. The disordered stretch occupies residues 220–273; that stretch reads LPPVSLAASSSPACDQSSQYPEEKSQDSSPRQGSELPLQFLGSSEPCSDLARED.

This sequence belongs to the SEN54 family. In terms of assembly, tRNA splicing endonuclease is a heterotetramer composed of TSEN2, TSEN15, TSEN34/LENG5 and TSEN54. tRNA splicing endonuclease complex also contains proteins of the pre-mRNA 3'-end processing machinery such as CLP1, CPSF1, CPSF4 and CSTF2.

It localises to the nucleus. It is found in the nucleolus. Functionally, non-catalytic subunit of the tRNA-splicing endonuclease complex, a complex responsible for identification and cleavage of the splice sites in pre-tRNA. It cleaves pre-tRNA at the 5' and 3' splice sites to release the intron. The products are an intron and two tRNA half-molecules bearing 2',3' cyclic phosphate and 5'-OH termini. There are no conserved sequences at the splice sites, but the intron is invariably located at the same site in the gene, placing the splice sites an invariant distance from the constant structural features of the tRNA body. The tRNA splicing endonuclease is also involved in mRNA processing via its association with pre-mRNA 3'-end processing factors, establishing a link between pre-tRNA splicing and pre-mRNA 3'-end formation, suggesting that the endonuclease subunits function in multiple RNA-processing events. The protein is tRNA-splicing endonuclease subunit Sen54 (Tsen54) of Mus musculus (Mouse).